The following is an 84-amino-acid chain: Translational regulator CsrA (84 aa).

Belongs to the CsrA/RsmA family. In terms of assembly, homodimer; the beta-strands of each monomer intercalate to form a hydrophobic core, while the alpha-helices form wings that extend away from the core.

The protein localises to the cytoplasm. Its function is as follows. A translational regulator that binds mRNA to regulate translation initiation and/or mRNA stability. Usually binds in the 5'-UTR at or near the Shine-Dalgarno sequence preventing ribosome-binding, thus repressing translation. Its main target seems to be the major flagellin gene, while its function is anatagonized by FliW. The sequence is that of Translational regulator CsrA from Leptospira interrogans serogroup Icterohaemorrhagiae serovar Lai (strain 56601).